Here is a 328-residue protein sequence, read N- to C-terminus: Homoarginine-6-hydroxylase 2-ODD-233 (328 aa).

The Fe2OG dioxygenase domain occupies 183–288 (FWVCRLIGYP…VSVAFFYESN (106 aa)). Fe cation-binding residues include H210, D212, and H268. R278 contributes to the 2-oxoglutarate binding site.

It belongs to the iron/ascorbate-dependent oxidoreductase family. The cofactor is Fe(2+). Requires L-ascorbate as cofactor. As to expression, expressed in roots and shoots.

The protein resides in the cytoplasm. The catalysed reaction is L-homoarginine + 2-oxoglutarate + O2 = 6-hydroxy-L-homoarginine + succinate + CO2. It carries out the reaction melatonin + 2-oxoglutarate + O2 = 2-hydroxymelatonin + succinate + CO2. In terms of biological role, 2-oxoglutarate-dependent dioxygenase catalyzing homoarginine 6-hydroxylation thus producing 6-hydroxy-L-homoarginine. Guanidine (Gd) is in turn synthesized by the spontaneous conversion of 6-hydroxy-L-homoarginine to (S)-2-amino-6-oxohexanoate (RHEA:79843); guanidine is a nitrogen-rich compound that can serve as a defense or signaling substance. Involved in melatonin degradation. Catalyzes the hydroxylation of melatonin to produce 2-hydroxymelatonin. The sequence is that of Homoarginine-6-hydroxylase 2-ODD-233 from Oryza sativa subsp. japonica (Rice).